The primary structure comprises 24 residues: Pseudin-2 (24 aa).

As to expression, expressed by the skin glands.

The protein localises to the secreted. Antimicrobial peptide with activity against fungus (C.albicans) and Gram-positive and Gram-negative bacteria (S.aureus and E.coli). Also has low hemolytic activity against human erythrocytes. The polypeptide is Pseudin-2 (Pseudis paradoxa (Paradoxical frog)).